A 457-amino-acid chain; its full sequence is tRNA modification GTPase MnmE (457 aa).

(6S)-5-formyl-5,6,7,8-tetrahydrofolate is bound by residues R25, E87, and R126. The region spanning 223–377 (GISTAIIGRP…IEERINQLFF (155 aa)) is the TrmE-type G domain. Residue N233 coordinates K(+). Residues 233-238 (NVGKSS), 252-258 (TDIEGTT), and 277-280 (DTAG) contribute to the GTP site. Position 237 (S237) interacts with Mg(2+). K(+) is bound by residues T252, I254, and T257. Residue T258 coordinates Mg(2+). K457 is a binding site for (6S)-5-formyl-5,6,7,8-tetrahydrofolate.

Belongs to the TRAFAC class TrmE-Era-EngA-EngB-Septin-like GTPase superfamily. TrmE GTPase family. In terms of assembly, homodimer. Heterotetramer of two MnmE and two MnmG subunits. K(+) serves as cofactor.

The protein localises to the cytoplasm. Its function is as follows. Exhibits a very high intrinsic GTPase hydrolysis rate. Involved in the addition of a carboxymethylaminomethyl (cmnm) group at the wobble position (U34) of certain tRNAs, forming tRNA-cmnm(5)s(2)U34. In Streptococcus sanguinis (strain SK36), this protein is tRNA modification GTPase MnmE.